The chain runs to 466 residues: Asparagine--tRNA ligase (466 aa).

This sequence belongs to the class-II aminoacyl-tRNA synthetase family. In terms of assembly, homodimer.

It localises to the cytoplasm. It carries out the reaction tRNA(Asn) + L-asparagine + ATP = L-asparaginyl-tRNA(Asn) + AMP + diphosphate + H(+). This is Asparagine--tRNA ligase from Pectobacterium atrosepticum (strain SCRI 1043 / ATCC BAA-672) (Erwinia carotovora subsp. atroseptica).